The sequence spans 101 residues: Small ribosomal subunit protein uS14 (101 aa).

Basic and acidic residues predominate over residues 1–10 (MAKKSSIEKN). The segment at 1–23 (MAKKSSIEKNNRRKRMVKNAAPK) is disordered.

It belongs to the universal ribosomal protein uS14 family. As to quaternary structure, part of the 30S ribosomal subunit. Contacts proteins S3 and S10.

Functionally, binds 16S rRNA, required for the assembly of 30S particles and may also be responsible for determining the conformation of the 16S rRNA at the A site. This Bradyrhizobium diazoefficiens (strain JCM 10833 / BCRC 13528 / IAM 13628 / NBRC 14792 / USDA 110) protein is Small ribosomal subunit protein uS14.